Here is an 801-residue protein sequence, read N- to C-terminus: MKVGRNMTNQQQSAAASSDLDLLDRYWRAANYLSVGQIYLLDNPLLREPLRAEHIKPRLLGHWGTTPGLNFIYAHLNRVIRALDLNVLYVCGPGHGGPGMVANTYLEGSYSEIYPNIARDADGLRKLFRQFSFPGGIPSHAAPETPGSIHEGGELGYALVHAYGAALDNPDLVVACVVGDGEAETGPLAASWHSNKFLNPAHDGAVLPILHLNGYKIANPTVLGRMSDSEIRDLFRGFGHEPLFVEGDDPKLMHRIMADALDVAFASIRSIQQHARDGRKNIERPRWPMIVLRSPKGWTGPKEVDGKKVEGFWRAHQVPVASCRENPAHLKVLEDWMRSYEPEKLFDASGALVPELQALAPEGNRRMGANPHANGGLLKKELKLPDFRSFAVEVPQPGAVTGEATRELGRFLRDVIRLNAQERNFRIMGPDETASNRLDAVFETTERVWMEPIEPYDVHLAQDGRVMEVLSEHLCQGWLEGYLLTGRHGFFSCYEAFIHIVDSMFNQHAKWLKVTRHLPWRRPIASLNYLLTSHVWRQDHNGFSHQDPGFVDLVANKKADIVRIYFPPDANTLLWIADHCLRTYNRINVIVAGKQPAPQWLSMQDAATHCDVGIGIWTWAGTEDAGGEPDVVMACAGDVPTLETLAAVDLLRKALPDLNIRVVNVVDLMTLQPQDQHPHGLSDRDFDSLFTRDKPVIFAYHGYPHLIHRLTYNRTNHAGLHVRGFAEEGTTTTPFDMVVLNELDRYHLAIEAIERVPGLATRAAQVKQQLRDKLLEHSRYVREHGEDMPEIRDWVWPGKPG.

It belongs to the XFP family. Thiamine diphosphate serves as cofactor.

The sequence is that of Probable phosphoketolase from Bradyrhizobium diazoefficiens (strain JCM 10833 / BCRC 13528 / IAM 13628 / NBRC 14792 / USDA 110).